We begin with the raw amino-acid sequence, 387 residues long: MATPTEHEDLSEQEVTEDEFKTPKIRETPEDIKLEAIVNTIAFHPKQDILAAGDIDGDIYLFSYSCTEGENKELWSSGHHLKSCRKVLFSSDGQKLFSVSKDKAIHIMDVEAGKLETRIPKAHKVPINAMLLIDENIFATGDDEGTLKVWDMRKGTSFMDLKHHEDYISDITIDQAKRTLLTSSGDGTLGVFNIKRRRFELLSEIQNGDLTSVSIMKRGRKVVCGSGEGTIYIFNWNGFGATSDRFAVQAESVDCIVPITDSILCAASTDGVIRAINILPNRVVGSIGQHVGEAIEEIARCRDTHFLASCAHDELIKFWDISSLPDEKVNDYRRRKKKDRRLKALSNKAFDTGQNFFAGLLDTTEENGKEGENDEDDDDEDSDSGSD.

A compositionally biased stretch (basic and acidic residues) spans 1–10 (MATPTEHEDL). Residues 1-24 (MATPTEHEDLSEQEVTEDEFKTPK) form a disordered region. WD repeat units follow at residues 33 to 72 (KLEAIVNTIAFHPKQDILAAGDIDGDIYLFSYSCTEGENK), 79 to 118 (HHLKSCRKVLFSSDGQKLFSVSKDKAIHIMDVEAGKLETR), 122 to 160 (AHKVPINAMLLIDENIFATGDDEGTLKVWDMRKGTSFMD), 163 to 202 (HHEDYISDITIDQAKRTLLTSSGDGTLGVFNIKRRRFELL), 205 to 244 (IQNGDLTSVSIMKRGRKVVCGSGEGTIYIFNWNGFGATSD), 247 to 286 (AVQAESVDCIVPITDSILCAASTDGVIRAINILPNRVVGS), and 290 to 329 (HVGEAIEEIARCRDTHFLASCAHDELIKFWDISSLPDEKV). Residues 356-387 (FFAGLLDTTEENGKEGENDEDDDDEDSDSGSD) form a disordered region. The segment covering 372–387 (ENDEDDDDEDSDSGSD) has biased composition (acidic residues).

It belongs to the WD repeat WDR55 family.

It localises to the nucleus. The protein localises to the nucleolus. In terms of biological role, nucleolar protein that acts as a modulator of rRNA synthesis. Plays a central role during organogenesis. In Danio rerio (Zebrafish), this protein is WD repeat-containing protein 55 (wdr55).